We begin with the raw amino-acid sequence, 317 residues long: E3 ubiquitin-protein ligase NRDP1 (317 aa).

Residues C18–R57 form an RING-type; degenerate zinc finger. The segment at K78–L138 adopts an SIAH-type; degenerate zinc-finger fold.

As to quaternary structure, interacts with USP8, ERBB3, PRKN and BIRC6. Interacts with CSF2RB, EPOR, IL3RA, MYD88 and TBK1. Interacts with Clec16a. Post-translationally, autoubiquitinated. Autoubiquitination leads to proteasomal degradation. Deubiquitinated by USP8 to get stabilized which induces apoptosis.

It catalyses the reaction S-ubiquitinyl-[E2 ubiquitin-conjugating enzyme]-L-cysteine + [acceptor protein]-L-lysine = [E2 ubiquitin-conjugating enzyme]-L-cysteine + N(6)-ubiquitinyl-[acceptor protein]-L-lysine.. The protein operates within protein modification; protein ubiquitination. Functionally, acts as E3 ubiquitin-protein ligase and regulates the degradation of target proteins. Polyubiquitinates MYD88. Negatively regulates MYD88-dependent production of pro-inflammatory cytokines. Can promote TRIF-dependent production of type I interferon and inhibits infection with vesicular stomatitis virus. Also promotes activation of TBK1 and IRF3. Involved in the ubiquitination of erythropoietin (EPO) and interleukin-3 (IL-3) receptors. Thus, through maintaining basal levels of cytokine receptors, RNF41 is involved in the control of hematopoietic progenitor cell differentiation into myeloerythroid lineages. Contributes to the maintenance of steady-state ERBB3 levels by mediating its growth factor-independent degradation. Involved in the degradation of the inhibitor of apoptosis BIRC6 and thus is an important regulator of cell death by promoting apoptosis. Also acts as a PRKN modifier that accelerates its degradation, resulting in a reduction of PRKN activity, influencing the balance of intracellular redox state. The RNF41-PRKN pathway regulates autophagosome-lysosome fusion during late mitophagy. Mitophagy is a selective form of autophagy necessary for mitochondrial quality control. The protein is E3 ubiquitin-protein ligase NRDP1 (Rnf41) of Mus musculus (Mouse).